A 158-amino-acid polypeptide reads, in one-letter code: Regulator of sigma D (158 aa).

Belongs to the Rsd/AlgQ family. As to quaternary structure, interacts with RpoD.

Its subcellular location is the cytoplasm. Binds RpoD and negatively regulates RpoD-mediated transcription activation by preventing the interaction between the primary sigma factor RpoD with the catalytic core of the RNA polymerase and with promoter DNA. May be involved in replacement of the RNA polymerase sigma subunit from RpoD to RpoS during the transition from exponential growth to the stationary phase. This Escherichia coli O127:H6 (strain E2348/69 / EPEC) protein is Regulator of sigma D.